Here is a 178-residue protein sequence, read N- to C-terminus: uncharacterized protein (178 aa).

Residues His-52 to Thr-177 form the MSP domain.

This is an uncharacterized protein from Caenorhabditis elegans.